We begin with the raw amino-acid sequence, 771 residues long: Metal transporter CNNM4 (771 aa).

Residues 1–175 are Extracellular-facing; it reads MAPGGGGGRR…LLFMVEEHGR (175 aa). Residue Asn119 is glycosylated (N-linked (GlcNAc...) asparagine). Residues 175-355 enclose the CNNM transmembrane domain; sequence RFLPLWLHIL…EPYNDLVKEE (181 aa). The chain crosses the membrane as a helical span at residues 176–196; it reads FLPLWLHILLVMVLLVLSGIF. Over 197 to 237 the chain is Cytoplasmic; it reads SGLNLGLMALDPMELRIVQNCGTEKERKYARKIEPIRRKGN. An intramembrane region (helical) is located at residues 238-258; it reads YLLCSLLLGNVLVNTSLTILL. Residues 259–261 are Cytoplasmic-facing; it reads DNL. Residues 262 to 282 form a helical membrane-spanning segment; that stretch reads IGSGIMAVASSTIGIVIFGEI. At 283–290 the chain is on the extracellular side; sequence LPQALCSR. The helical transmembrane segment at 291–313 threads the bilayer; sequence HGLAVGANTIVLTKVFMLLTFPL. At 314–771 the chain is on the cytoplasmic side; that stretch reads SFPISKLLDF…LHRASEEETI (458 aa). 2 CBS domains span residues 374 to 435 and 442 to 508; these read MTQL…CTPL and YNHP…ILDE. Phosphoserine occurs at positions 657, 661, and 766.

Belongs to the ACDP family. Interacts with COX11. Cornea, retina, teeth (at protein level). In the retina it is predominantly localized to the outer plexiform layer, inner plexiform layer and ganglion cell layer. In the tooth strongest expression is observed in the cell body of the ameloblasts. Expressed at high levels in the gastrointestinal tract and testis.

It localises to the cell membrane. Probable metal transporter. The interaction with the metal ion chaperone COX11 suggests that it may play a role in sensory neuron functions. May play a role in biomineralization and retinal function. This is Metal transporter CNNM4 (Cnnm4) from Mus musculus (Mouse).